Here is a 419-residue protein sequence, read N- to C-terminus: Synaptotagmin-2 (419 aa).

Over 1–62 (MRNIFKRNQE…NEINKIPLPP (62 aa)) the chain is Vesicular. The tract at residues 16 to 39 (ATTTATMPIGPVDNSTESGGAGES) is disordered. N-linked (GlcNAc...) asparagine glycosylation is present at Asn29. The helical transmembrane segment at 63–83 (WALIAIAVVAGLLLLTCCFCI) threads the bilayer. Residues 84-419 (CKKCCCKKKK…EVDALLGKNK (336 aa)) are Cytoplasmic-facing. The disordered stretch occupies residues 99 to 138 (GKGMKNAMNMKDMKGGQDDDDAETGLTEGEGEGEEEKEPE). The span at 116–136 (DDDDAETGLTEGEGEGEEEKE) shows a compositional bias: acidic residues. A phosphothreonine mark is found at Thr122 and Thr125. The tract at residues 133-379 (EEKEPENLGK…AIGKIFVGSN (247 aa)) is phospholipid binding. C2 domains lie at 139 to 258 (NLGK…EEWR) and 270 to 403 (KLGD…AQWH). 3 residues coordinate Ca(2+): Leu169, Asp170, and Asp176. The residue at position 199 (Thr199) is a Phosphothreonine. Tyr227 bears the Phosphotyrosine mark. Ca(2+) contacts are provided by Asp228, Phe229, Asp230, Ser233, Lys234, Asp236, Asp301, Asp307, Asp361, and Asp363. A Phosphothreonine modification is found at Thr383.

It belongs to the synaptotagmin family. Homotetramer. Heterodimer; heterodimerizes with SYT1 in presence of calcium. Interacts with STON2. Interacts with SCAMP5. Interacts with PRRT2. It depends on Ca(2+) as a cofactor. Post-translationally, phosphorylation at Thr-199 by WNK1, changes the calcium requirement for SYT2-binding to phospholipid membranes. Expressed at the neuromuscular junction. Expressed in melanocytes.

It localises to the cytoplasmic vesicle. It is found in the secretory vesicle. The protein resides in the synaptic vesicle membrane. The protein localises to the chromaffin granule membrane. Its subcellular location is the cytoplasm. Exhibits calcium-dependent phospholipid and inositol polyphosphate binding properties. May have a regulatory role in the membrane interactions during trafficking of synaptic vesicles at the active zone of the synapse. Plays a role in dendrite formation by melanocytes. The protein is Synaptotagmin-2 of Homo sapiens (Human).